The primary structure comprises 271 residues: Chymotrypsin-like elastase family member 2A (271 aa).

The N-terminal stretch at 1-16 (MIRTLLLSALVAGALS) is a signal peptide. Residues 17 to 30 (CGYPTYEVEDDVSR) constitute a propeptide, activation peptide. Residues 31 to 269 (VVGGQEATPN…YIDWINSVMA (239 aa)) form the Peptidase S1 domain. A disulfide bridge links C60 with C76. Active-site charge relay system residues include H75 and D123. Disulfide bonds link C157-C224, C188-C204, and C214-C245. The active-site Charge relay system is S218.

This sequence belongs to the peptidase S1 family. Elastase subfamily. Interacts with CPA1. Interacts with SERPINA1. In terms of tissue distribution, highly expressed in pancreas (at mRNA and protein levels). Also expressed in adrenal gland and small intestine.

Its subcellular location is the secreted. It carries out the reaction Preferential cleavage: Leu-|-Xaa, Met-|-Xaa and Phe-|-Xaa. Hydrolyzes elastin.. Elastase that enhances insulin signaling and might have a physiologic role in cellular glucose metabolism. Circulates in plasma and reduces platelet hyperactivation, triggers both insulin secretion and degradation, and increases insulin sensitivity. In Mus musculus (Mouse), this protein is Chymotrypsin-like elastase family member 2A.